Consider the following 243-residue polypeptide: MSKTHFGFESVEENEKAKKVAGVFHSVASNYDLMNDLMSAGMHRAWKAFTIAQANVRPGFKVLDIAAGTGDLTKSFAKAAGPTGEVWHTDINESMLRVGRDRLLDKGIVTPSLLCDAEKIPFPDNYFDVVTVAFGLRNMTHKDAALAEMRRVTKPGGRVMVLEFSKVWDPLKKAYDLYSFKVLPWLGDKFAKDAESYRYLAESIRMHPDQDTLKTMMEQAGLDAVKYYNLSGGVVALHLGTKY.

Residues Thr69, Asp90, and 116–117 each bind S-adenosyl-L-methionine; that span reads DA.

The protein belongs to the class I-like SAM-binding methyltransferase superfamily. MenG/UbiE family.

The enzyme catalyses a 2-demethylmenaquinol + S-adenosyl-L-methionine = a menaquinol + S-adenosyl-L-homocysteine + H(+). It catalyses the reaction a 2-methoxy-6-(all-trans-polyprenyl)benzene-1,4-diol + S-adenosyl-L-methionine = a 5-methoxy-2-methyl-3-(all-trans-polyprenyl)benzene-1,4-diol + S-adenosyl-L-homocysteine + H(+). It participates in quinol/quinone metabolism; menaquinone biosynthesis; menaquinol from 1,4-dihydroxy-2-naphthoate: step 2/2. It functions in the pathway cofactor biosynthesis; ubiquinone biosynthesis. Functionally, methyltransferase required for the conversion of demethylmenaquinol (DMKH2) to menaquinol (MKH2) and the conversion of 2-polyprenyl-6-methoxy-1,4-benzoquinol (DDMQH2) to 2-polyprenyl-3-methyl-6-methoxy-1,4-benzoquinol (DMQH2). The sequence is that of Ubiquinone/menaquinone biosynthesis C-methyltransferase UbiE from Burkholderia cenocepacia (strain HI2424).